The chain runs to 332 residues: Ferredoxin--NADP reductase (332 aa).

Residues threonine 20, glutamate 39, glutamine 47, tyrosine 52, valine 92, phenylalanine 126, aspartate 288, and serine 329 each contribute to the FAD site.

This sequence belongs to the ferredoxin--NADP reductase type 2 family. In terms of assembly, homodimer. FAD is required as a cofactor.

The catalysed reaction is 2 reduced [2Fe-2S]-[ferredoxin] + NADP(+) + H(+) = 2 oxidized [2Fe-2S]-[ferredoxin] + NADPH. The protein is Ferredoxin--NADP reductase of Geobacillus thermodenitrificans (strain NG80-2).